A 277-amino-acid polypeptide reads, in one-letter code: Phosphonates import ATP-binding protein PhnC 2 (277 aa).

The ABC transporter domain occupies 5 to 253; the sequence is IHVQGLNKTF…FLNDLYGADA (249 aa). 37 to 44 is a binding site for ATP; sequence GASGSGKS.

Belongs to the ABC transporter superfamily. Phosphonates importer (TC 3.A.1.9.1) family. As to quaternary structure, the complex is composed of two ATP-binding proteins (PhnC), two transmembrane proteins (PhnE) and a solute-binding protein (PhnD).

It is found in the cell inner membrane. The catalysed reaction is phosphonate(out) + ATP + H2O = phosphonate(in) + ADP + phosphate + H(+). Functionally, part of the ABC transporter complex PhnCDE involved in phosphonates import. Responsible for energy coupling to the transport system. This is Phosphonates import ATP-binding protein PhnC 2 from Pseudomonas savastanoi pv. phaseolicola (strain 1448A / Race 6) (Pseudomonas syringae pv. phaseolicola (strain 1448A / Race 6)).